We begin with the raw amino-acid sequence, 380 residues long: GTP-binding protein 10 (380 aa).

Positions G13–I148 constitute an Obg domain. Residues A149–E344 form the OBG-type G domain. GTP-binding positions include G155–S162, D202–L206, and N278–D281.

The protein belongs to the TRAFAC class OBG-HflX-like GTPase superfamily. OBG GTPase family.

The protein resides in the nucleus. Its subcellular location is the nucleolus. May be involved in the ribosome maturation process. This is GTP-binding protein 10 (gtpbp10) from Danio rerio (Zebrafish).